The sequence spans 223 residues: Ribose-5-phosphate isomerase A (223 aa).

Substrate contacts are provided by residues 28–31 (TGST), 81–84 (DGAD), and 94–97 (KGGG). The Proton acceptor role is filled by Glu-103. A substrate-binding site is contributed by Lys-121.

This sequence belongs to the ribose 5-phosphate isomerase family. In terms of assembly, homodimer.

It catalyses the reaction aldehydo-D-ribose 5-phosphate = D-ribulose 5-phosphate. The protein operates within carbohydrate degradation; pentose phosphate pathway; D-ribose 5-phosphate from D-ribulose 5-phosphate (non-oxidative stage): step 1/1. In terms of biological role, catalyzes the reversible conversion of ribose-5-phosphate to ribulose 5-phosphate. This Janthinobacterium sp. (strain Marseille) (Minibacterium massiliensis) protein is Ribose-5-phosphate isomerase A.